Here is a 497-residue protein sequence, read N- to C-terminus: Sperm motility kinase Z (497 aa).

Positions Y28 to L275 constitute a Protein kinase domain. ATP-binding positions include L34 to V42 and K57. D146 serves as the catalytic Proton acceptor. The UBA domain maps to F292–A332. Disordered stretches follow at residues T383–Q410 and S439–L460.

It belongs to the protein kinase superfamily. CAMK Ser/Thr protein kinase family. Smok subfamily.

The enzyme catalyses L-seryl-[protein] + ATP = O-phospho-L-seryl-[protein] + ADP + H(+). The catalysed reaction is L-threonyl-[protein] + ATP = O-phospho-L-threonyl-[protein] + ADP + H(+). Functionally, may play a role in sperm motility, especially in the regulation of flagellar function. The protein is Sperm motility kinase Z (Gm4922) of Mus musculus (Mouse).